A 264-amino-acid polypeptide reads, in one-letter code: Probable glycerol uptake facilitator protein (264 aa).

Helical transmembrane passes span 13-33 (WIGA…GAGS) and 51-71 (TAAF…NSLF). An NPA 1 motif is present at residues 78–80 (NPA). 3 helical membrane-spanning segments follow: residues 104 to 124 (IPLL…GAML), 162 to 182 (FATE…AGSF), and 195 to 215 (VPML…GTAI). Positions 216–218 (NPA) match the NPA 2 motif. The helical transmembrane segment at 244 to 264 (IPVAAPLSASVILGVLVAVIV) threads the bilayer.

This sequence belongs to the MIP/aquaporin (TC 1.A.8) family.

It is found in the cell membrane. The enzyme catalyses glycerol(in) = glycerol(out). Its function is as follows. Mediates glycerol diffusion across the cytoplasmic membrane via a pore-type mechanism. This is Probable glycerol uptake facilitator protein (glpF) from Mycoplasma pneumoniae (strain ATCC 29342 / M129 / Subtype 1) (Mycoplasmoides pneumoniae).